The following is a 581-amino-acid chain: Nicotinic acid-CoA ligase pyr1 (581 aa).

An AMP-binding site is contributed by 204-215 (MFLTSGTSGLPK). The tract at residues 477–555 (EIEGILLKDP…DEIPRTGIGK (79 aa)) is AMP-binding.

It belongs to the ATP-dependent AMP-binding enzyme family.

The catalysed reaction is nicotinate + ATP + CoA = nicotinyl-CoA + AMP + diphosphate. Its pathway is secondary metabolite biosynthesis; terpenoid biosynthesis. Its function is as follows. Nicotinic acid-CoA ligase; part of the gene cluster that mediates the biosynthesis of pyripyropene A, a specific human acyl-coenzyme A:cholesterol acyltransferase 2 inhibitor. The first step of the pathway is the synthesis of nicotinyl-CoA from nicotinic acid by the nicotinic acid-CoA ligase pyr1. Nicotinyl-CoA is then a substrate of polyketide synthase pyr2 to produce 4-hydroxy-6-(3-pyridinyl)-2H-pyran-2-one (HPPO) which is further prenylated by the polyprenyl transferase pyr6 to yield farnesyl-HPPO. The next steps consist of an epoxidation of farnesyl-HPPO to epoxyfarnesyl-HPPO by FAD-dependent monooxygenase pyr5 and a cyclization of the terpenoid portion by the terpene cyclase pyr4 to yield deacetyl-pyripyropene E. The 2 cytochrome P450 monooxygenases pyr3 and pyr9, and the 2 acetyltransferases pyr7 and pyr8 are involved in the conversion of deacetyl-pyripyropene E into pyripyropene A through several cycles of oxidation and acetylation steps. Pyr7 acetylates deacetyl-pyripyropene E to pyripyropene E which is oxidized to 11-deacetyl-pyripyropene O by pyr3, which is in turn acetylated into pyripyropene O by pyr8. Pyripyropene O is then oxidized to deacetyl-pyripyropene A by pyr9. Deacetyl-pyripyropene A is finally acetylated to pyripyropene A by pyr8. This is Nicotinic acid-CoA ligase pyr1 from Aspergillus fumigatus (strain ATCC MYA-4609 / CBS 101355 / FGSC A1100 / Af293) (Neosartorya fumigata).